The sequence spans 110 residues: Small ribosomal subunit protein eS25 (110 aa).

The segment at 1–37 is disordered; it reads MGGASKKPISTMEKRLKKEAEKQQKAEEKKKGPSKTG. The segment covering 12–37 has biased composition (basic and acidic residues); that stretch reads MEKRLKKEAEKQQKAEEKKKGPSKTG.

Belongs to the eukaryotic ribosomal protein eS25 family.

In Saccharolobus solfataricus (strain ATCC 35092 / DSM 1617 / JCM 11322 / P2) (Sulfolobus solfataricus), this protein is Small ribosomal subunit protein eS25 (rps25e).